A 476-amino-acid chain; its full sequence is ATP synthase subunit beta (476 aa).

Gly-161 to Thr-168 lines the ATP pocket.

Belongs to the ATPase alpha/beta chains family. In terms of assembly, F-type ATPases have 2 components, CF(1) - the catalytic core - and CF(0) - the membrane proton channel. CF(1) has five subunits: alpha(3), beta(3), gamma(1), delta(1), epsilon(1). CF(0) has three main subunits: a(1), b(2) and c(9-12). The alpha and beta chains form an alternating ring which encloses part of the gamma chain. CF(1) is attached to CF(0) by a central stalk formed by the gamma and epsilon chains, while a peripheral stalk is formed by the delta and b chains.

The protein localises to the cell membrane. The catalysed reaction is ATP + H2O + 4 H(+)(in) = ADP + phosphate + 5 H(+)(out). Its function is as follows. Produces ATP from ADP in the presence of a proton gradient across the membrane. The catalytic sites are hosted primarily by the beta subunits. The polypeptide is ATP synthase subunit beta (Mycolicibacterium gilvum (strain PYR-GCK) (Mycobacterium gilvum (strain PYR-GCK))).